The following is a 329-amino-acid chain: Ribosomal RNA small subunit methyltransferase H (329 aa).

S-adenosyl-L-methionine is bound by residues 39 to 41 (GGY), D57, F84, D100, and Q107. Residues 285 to 305 (GPDKDELAQNPRSRSALLRVG) form a disordered region.

It belongs to the methyltransferase superfamily. RsmH family.

The protein localises to the cytoplasm. It carries out the reaction cytidine(1402) in 16S rRNA + S-adenosyl-L-methionine = N(4)-methylcytidine(1402) in 16S rRNA + S-adenosyl-L-homocysteine + H(+). In terms of biological role, specifically methylates the N4 position of cytidine in position 1402 (C1402) of 16S rRNA. The polypeptide is Ribosomal RNA small subunit methyltransferase H (Ruegeria sp. (strain TM1040) (Silicibacter sp.)).